Reading from the N-terminus, the 280-residue chain is Putative pyruvate, phosphate dikinase regulatory protein (280 aa).

152–159 (GVSRTSKS) contacts ADP.

This sequence belongs to the pyruvate, phosphate/water dikinase regulatory protein family. PDRP subfamily.

The catalysed reaction is N(tele)-phospho-L-histidyl/L-threonyl-[pyruvate, phosphate dikinase] + ADP = N(tele)-phospho-L-histidyl/O-phospho-L-threonyl-[pyruvate, phosphate dikinase] + AMP + H(+). The enzyme catalyses N(tele)-phospho-L-histidyl/O-phospho-L-threonyl-[pyruvate, phosphate dikinase] + phosphate + H(+) = N(tele)-phospho-L-histidyl/L-threonyl-[pyruvate, phosphate dikinase] + diphosphate. In terms of biological role, bifunctional serine/threonine kinase and phosphorylase involved in the regulation of the pyruvate, phosphate dikinase (PPDK) by catalyzing its phosphorylation/dephosphorylation. This is Putative pyruvate, phosphate dikinase regulatory protein from Anaplasma phagocytophilum (strain HZ).